The chain runs to 720 residues: NAD(+) hydrolase ApTIR (720 aa).

One can recognise a TIR domain in the interval 1-131 (MRYDAFISYS…AVPPALRGVF (131 aa)). Residues 10–11 (SH) and Ala-48 each bind NAD(+). Glu-84 is an active-site residue. A helical membrane pass occupies residues 192–211 (GALAVVCALLLLVAGTAVAW). Disordered regions lie at residues 231–275 (ATAA…AVAE) and 292–359 (EGIA…EEAV). 2 stretches are compositionally biased toward basic and acidic residues: residues 256–268 (EQQRAQKAAEEAR) and 307–359 (AEAR…EEAV). Positions 313 to 362 (RGVADAEKAKANRAAAEAERQRKIAADEQRKAHEAAAEAERQREEAVKQQ) form a coiled coil. WD repeat units lie at residues 420–459 (GHTAVVSAVALSGDGRTLVTDGLDGTVMVWDPTDRAAPRR), 465–504 (SSTAPVYTVALSGDGRTLVTGSEDGTAMVWDLTDRAAPRR), 510–549 (GHTDVVDAVALSGDGRTLATGSFDGTAMVWDVTDRAAPRR), 555–594 (DHTAPVTAVALSGDGRTLATGSDDHTAMVWDLTDRAAPRR), 600–639 (GHTAGVDAVALSGDGRTLATGSYDGTAMLWDLTDRAAPRR), 645–684 (GHTAQVYTVALSRDGRTLATGSEDHTAMVWDLTDRAAPRR), and 690–720 (GHTDAVDAVALSGDGRTLATAASITRRCCGM).

It localises to the cell membrane. It carries out the reaction NAD(+) + H2O = ADP-D-ribose + nicotinamide + H(+). In terms of biological role, NAD(+) hydrolase (NADase) that catalyzes cleavage of NAD(+) into ADP-D-ribose (ADPR) and nicotinamide. This is NAD(+) hydrolase ApTIR from Actinoplanes sp. (strain ATCC 31044 / CBS 674.73 / SE50/110).